A 195-amino-acid chain; its full sequence is Probable GTP-binding protein EngB (195 aa).

Residues Gly-22–Lys-195 enclose the EngB-type G domain. Residues Gly-30–Ser-37, Gly-57–Thr-61, Asp-75–Gly-78, Thr-142–Asp-145, and Phe-174–Ser-176 contribute to the GTP site. Positions 37 and 59 each coordinate Mg(2+).

The protein belongs to the TRAFAC class TrmE-Era-EngA-EngB-Septin-like GTPase superfamily. EngB GTPase family. Mg(2+) is required as a cofactor.

In terms of biological role, necessary for normal cell division and for the maintenance of normal septation. The chain is Probable GTP-binding protein EngB from Bacillus pumilus (strain SAFR-032).